Reading from the N-terminus, the 314-residue chain is Olfactory receptor 1E1 (314 aa).

Over 1 to 25 (MMGQNQTSISDFLLLGLPIQPEQQN) the chain is Extracellular. The N-linked (GlcNAc...) asparagine glycan is linked to N5. A helical transmembrane segment spans residues 26 to 49 (LCYALFLAMYLTTLLGNLLIIVLI). Over 50–57 (RLDSHLHT) the chain is Cytoplasmic. A helical transmembrane segment spans residues 58–79 (PMYLFLSNLSFSDLCFSSVTIP). The Extracellular segment spans residues 80–100 (KLLQNMQNQDPSIPYADCLTQ). C97 and C189 form a disulfide bridge. A helical transmembrane segment spans residues 101 to 120 (MYFFLLFGDLESFLLVAMAY). Residues 121–139 (DRYVAICFPLHYTAIMSPM) are Cytoplasmic-facing. A helical membrane pass occupies residues 140 to 158 (LCLSVVALSWVLTTFHAML). The Extracellular segment spans residues 159-195 (HTLLMARLCFCADNVIPHFFCDMSALLKLACSDTRVN). The helical transmembrane segment at 196-219 (EWVIFIMGGLILVIPFLLILGSYA) threads the bilayer. Topologically, residues 220 to 236 (RIVSSILKVPSSKGICK) are cytoplasmic. Residues 237 to 259 (ALSTCGSHLSVVSLFYGTVIGLY) form a helical membrane-spanning segment. The Extracellular segment spans residues 260 to 272 (LCPSANSSTLKDT). Residues 273–292 (VMAMIYTVVTPMLNPFIYSL) form a helical membrane-spanning segment. Over 293–314 (RNRDMKGALSRVIHQKKTFFSL) the chain is Cytoplasmic.

This sequence belongs to the G-protein coupled receptor 1 family.

The protein resides in the cell membrane. In terms of biological role, odorant receptor. The chain is Olfactory receptor 1E1 (OR1E1) from Pan troglodytes (Chimpanzee).